A 116-amino-acid polypeptide reads, in one-letter code: Putative pterin-4-alpha-carbinolamine dehydratase (116 aa).

This sequence belongs to the pterin-4-alpha-carbinolamine dehydratase family.

It carries out the reaction (4aS,6R)-4a-hydroxy-L-erythro-5,6,7,8-tetrahydrobiopterin = (6R)-L-erythro-6,7-dihydrobiopterin + H2O. This chain is Putative pterin-4-alpha-carbinolamine dehydratase, found in Stenotrophomonas maltophilia (strain R551-3).